The chain runs to 91 residues: Small ribosomal subunit protein bS20 (91 aa).

Residues 1–21 are compositionally biased toward basic and acidic residues; that stretch reads MPLHKSAEKRLRQAARRNERN. Positions 1–24 are disordered; that stretch reads MPLHKSAEKRLRQAARRNERNRAR.

Belongs to the bacterial ribosomal protein bS20 family.

Its function is as follows. Binds directly to 16S ribosomal RNA. This Chlorobaculum parvum (strain DSM 263 / NCIMB 8327) (Chlorobium vibrioforme subsp. thiosulfatophilum) protein is Small ribosomal subunit protein bS20.